Consider the following 405-residue polypeptide: Farnesyl pyrophosphate synthase (405 aa).

Residues Asp158 and Asp162 each coordinate Mg(2+). The short motif at Asp158–Asp162 is the DDXXD motif element.

This sequence belongs to the FPP/GGPP synthase family. Mg(2+) is required as a cofactor.

It catalyses the reaction isopentenyl diphosphate + (2E)-geranyl diphosphate = (2E,6E)-farnesyl diphosphate + diphosphate. Its pathway is pheromone biosynthesis. Its function is as follows. Farnesyl pyrophosphate synthase involved in murgantiol biosynthesis, a male-released aggregation pheromone, by catalyzing the formation of (2E,6E)-farnesyl diphosphate. The chain is Farnesyl pyrophosphate synthase from Murgantia histrionica (Harlequin bug).